We begin with the raw amino-acid sequence, 144 residues long: SsrA-binding protein (144 aa).

Belongs to the SmpB family.

It is found in the cytoplasm. Its function is as follows. Required for rescue of stalled ribosomes mediated by trans-translation. Binds to transfer-messenger RNA (tmRNA), required for stable association of tmRNA with ribosomes. tmRNA and SmpB together mimic tRNA shape, replacing the anticodon stem-loop with SmpB. tmRNA is encoded by the ssrA gene; the 2 termini fold to resemble tRNA(Ala) and it encodes a 'tag peptide', a short internal open reading frame. During trans-translation Ala-aminoacylated tmRNA acts like a tRNA, entering the A-site of stalled ribosomes, displacing the stalled mRNA. The ribosome then switches to translate the ORF on the tmRNA; the nascent peptide is terminated with the 'tag peptide' encoded by the tmRNA and targeted for degradation. The ribosome is freed to recommence translation, which seems to be the essential function of trans-translation. In Thermus thermophilus (strain ATCC BAA-163 / DSM 7039 / HB27), this protein is SsrA-binding protein.